Reading from the N-terminus, the 78-residue chain is Large ribosomal subunit protein bL28 (78 aa).

The protein belongs to the bacterial ribosomal protein bL28 family.

The polypeptide is Large ribosomal subunit protein bL28 (Proteus mirabilis (strain HI4320)).